The sequence spans 197 residues: ATP-dependent Clp protease proteolytic subunit 2 (197 aa).

Catalysis depends on Ser101, which acts as the Nucleophile. The active site involves His126.

This sequence belongs to the peptidase S14 family. Fourteen ClpP subunits assemble into 2 heptameric rings which stack back to back to give a disk-like structure with a central cavity, resembling the structure of eukaryotic proteasomes.

The protein resides in the cytoplasm. It catalyses the reaction Hydrolysis of proteins to small peptides in the presence of ATP and magnesium. alpha-casein is the usual test substrate. In the absence of ATP, only oligopeptides shorter than five residues are hydrolyzed (such as succinyl-Leu-Tyr-|-NHMec, and Leu-Tyr-Leu-|-Tyr-Trp, in which cleavage of the -Tyr-|-Leu- and -Tyr-|-Trp bonds also occurs).. In terms of biological role, cleaves peptides in various proteins in a process that requires ATP hydrolysis. Has a chymotrypsin-like activity. Plays a major role in the degradation of misfolded proteins. This Trichormus variabilis (strain ATCC 29413 / PCC 7937) (Anabaena variabilis) protein is ATP-dependent Clp protease proteolytic subunit 2.